The primary structure comprises 904 residues: Anoctamin-5 (904 aa).

The Cytoplasmic portion of the chain corresponds to 1 to 290 (MVEQEGLTAK…HLIRNYFGEK (290 aa)). Residues 291–311 (IGIYFVFLGYYTEMLLFAALV) traverse the membrane as a helical segment. At 312-371 (GLACFIYGLLSMENNRTSTEICDPDIGGQMIMCPLCDEVCDYWRLNTTCLHSKFSHLFDN) the chain is on the extracellular side. 3 N-linked (GlcNAc...) asparagine glycosylation sites follow: Asn-326, Asn-357, and Asn-371. A helical membrane pass occupies residues 372–392 (ESTVFFALFMGIWVTLFLEFW). The Cytoplasmic portion of the chain corresponds to 393–453 (KQRQARLEYE…CHRIPWYFVS (61 aa)). A helical transmembrane segment spans residues 454–474 (GTTVTFGMALLLSSMVSILIY). The Extracellular portion of the chain corresponds to 475-502 (RLSVFATFASFMESEATLQSVKSFFTPQ). A helical transmembrane segment spans residues 503–523 (LATALSGSCLNCIVILILNFF). Topologically, residues 524 to 548 (YEKISAWITKMEIPRTHQEYESSLT) are cytoplasmic. A helical membrane pass occupies residues 549-569 (LKMFLFQFVNYYSSCFYVAFF). At 570-667 (KGKFVGYPGS…RGLFYEYLET (98 aa)) the chain is on the extracellular side. Residues 668–688 (VIQFGFATLFVASFPLAPLFA) traverse the membrane as a helical segment. The Cytoplasmic segment spans residues 689-723 (LMNNIMGIRVDAWKLTTQYRRPVAAKAHSIGVWQD). Residues 724–744 (ILFGMAIVSVATNAFIVSFTS) form a helical membrane-spanning segment. The Extracellular portion of the chain corresponds to 745–825 (DIIPRLVYFY…FWHVLAAKMT (81 aa)). Residues Asn-759, Asn-769, and Asn-782 are each glycosylated (N-linked (GlcNAc...) asparagine). The helical transmembrane segment at 826 to 846 (FIIVMEHVVFLFKFLLAWLIP) threads the bilayer. The Cytoplasmic segment spans residues 847 to 904 (DVPKDVVEKIKREKLMTIKIIHDFELNKLKENLDVEYGNIMKNVLVDEDNSLKAKTTV).

The protein belongs to the anoctamin family. Highly expressed in skeletal muscle, bone tissues and thyroid gland.

The protein localises to the endoplasmic reticulum membrane. The protein resides in the cell membrane. Plays a role in plasma membrane repair in a process involving annexins. Does not exhibit calcium-activated chloride channel (CaCC) activity. This Mus musculus (Mouse) protein is Anoctamin-5 (Ano5).